We begin with the raw amino-acid sequence, 284 residues long: Aminoglycoside 6-adenylyltransferase (284 aa).

In terms of assembly, homodimer.

It is found in the cytoplasm. It carries out the reaction streptomycin + ATP = 6-O-adenylylstreptomycin + diphosphate. It catalyses the reaction streptomycin + GTP = 6-O-guanylylstreptomycin + diphosphate. The enzyme catalyses streptidine + ATP = 6-O-adenylylstreptidine + diphosphate. Functionally, mediates bacterial resistance to streptomycin. Adenylates streptomycin on the O-6 residue. Adenylates streptidine on the O-6 residue. Does not act on spectinomycin, neomycin-B or kanamycin. Specific for ATP and GTP nucleotides incorporating a purine ring. No reaction with CTP or UTP. This is Aminoglycoside 6-adenylyltransferase from Bacillus subtilis (strain 168).